The chain runs to 54 residues: Photosystem II reaction center protein L (54 aa).

Residues 33–53 form a helical membrane-spanning segment; sequence SLFWGLLLIFVLAVLFSSYIF.

Belongs to the PsbL family. As to quaternary structure, PSII is composed of 1 copy each of membrane proteins PsbA, PsbB, PsbC, PsbD, PsbE, PsbF, PsbH, PsbI, PsbJ, PsbK, PsbL, PsbM, PsbT, PsbX, PsbY, PsbZ, Psb30/Ycf12, at least 3 peripheral proteins of the oxygen-evolving complex and a large number of cofactors. It forms dimeric complexes.

Its subcellular location is the plastid. It is found in the chloroplast thylakoid membrane. In terms of biological role, one of the components of the core complex of photosystem II (PSII). PSII is a light-driven water:plastoquinone oxidoreductase that uses light energy to abstract electrons from H(2)O, generating O(2) and a proton gradient subsequently used for ATP formation. It consists of a core antenna complex that captures photons, and an electron transfer chain that converts photonic excitation into a charge separation. This subunit is found at the monomer-monomer interface and is required for correct PSII assembly and/or dimerization. In Stigeoclonium helveticum (Green alga), this protein is Photosystem II reaction center protein L.